Here is a 387-residue protein sequence, read N- to C-terminus: DNA double-strand break repair protein Mre11 (387 aa).

Residues aspartate 11, histidine 13, aspartate 52, and aspartate 87 each coordinate Mn(2+). Histidine 88 serves as the catalytic Proton donor. Positions 159, 190, and 192 each coordinate Mn(2+).

The protein belongs to the MRE11/RAD32 family. As to quaternary structure, homodimer. Forms a heterotetramer composed of two Mre11 subunits and two Rad50 subunits. Interacts with HerA. The cofactor is Mn(2+).

Its activity is regulated as follows. Nuclease activity is regulated by Rad50. Functionally, part of the Rad50/Mre11 complex, which is involved in the early steps of DNA double-strand break (DSB) repair. The complex may facilitate opening of the processed DNA ends to aid in the recruitment of HerA and NurA. Mre11 binds to DSB ends and has both double-stranded 3'-5' exonuclease activity and single-stranded endonuclease activity. This Sulfurisphaera tokodaii (strain DSM 16993 / JCM 10545 / NBRC 100140 / 7) (Sulfolobus tokodaii) protein is DNA double-strand break repair protein Mre11.